Reading from the N-terminus, the 261-residue chain is Acetoacetate decarboxylase 2 (261 aa).

The active-site Schiff-base intermediate with acetoacetate is the lysine 116.

Belongs to the ADC family.

It carries out the reaction acetoacetate + H(+) = acetone + CO2. Its function is as follows. Catalyzes the conversion of acetoacetate to acetone and carbon dioxide. This is Acetoacetate decarboxylase 2 from Mesorhizobium japonicum (strain LMG 29417 / CECT 9101 / MAFF 303099) (Mesorhizobium loti (strain MAFF 303099)).